The chain runs to 423 residues: Cytochrome c biogenesis protein Ccs1 (423 aa).

The next 3 helical transmembrane spans lie at 11 to 31, 70 to 90, and 153 to 173; these read LKFA…GSII, NFWF…CTFF, and IAPV…IFAS.

The protein belongs to the Ccs1/CcsB family. As to quaternary structure, may interact with CcsA.

It localises to the plastid. The protein localises to the chloroplast thylakoid membrane. Required during biogenesis of c-type cytochromes (cytochrome c6 and cytochrome f) at the step of heme attachment. The sequence is that of Cytochrome c biogenesis protein Ccs1 from Heterosigma akashiwo (strain NIES-293 / 8280G21-1).